The following is a 177-amino-acid chain: Large ribosomal subunit protein uL6 (177 aa).

The protein belongs to the universal ribosomal protein uL6 family. As to quaternary structure, part of the 50S ribosomal subunit.

Its function is as follows. This protein binds to the 23S rRNA, and is important in its secondary structure. It is located near the subunit interface in the base of the L7/L12 stalk, and near the tRNA binding site of the peptidyltransferase center. The polypeptide is Large ribosomal subunit protein uL6 (Rubrobacter xylanophilus (strain DSM 9941 / JCM 11954 / NBRC 16129 / PRD-1)).